The sequence spans 74 residues: Large ribosomal subunit protein eL38B (74 aa).

The protein belongs to the eukaryotic ribosomal protein eL38 family. In terms of assembly, component of the large ribosomal subunit (LSU). Mature yeast ribosomes consist of a small (40S) and a large (60S) subunit. The 40S small subunit contains 1 molecule of ribosomal RNA (18S rRNA) and at least 33 different proteins. The large 60S subunit contains 3 rRNA molecules (25S, 5.8S and 5S rRNA) and at least 46 different proteins.

The protein resides in the cytoplasm. In terms of biological role, component of the ribosome, a large ribonucleoprotein complex responsible for the synthesis of proteins in the cell. The small ribosomal subunit (SSU) binds messenger RNAs (mRNAs) and translates the encoded message by selecting cognate aminoacyl-transfer RNA (tRNA) molecules. The large subunit (LSU) contains the ribosomal catalytic site termed the peptidyl transferase center (PTC), which catalyzes the formation of peptide bonds, thereby polymerizing the amino acids delivered by tRNAs into a polypeptide chain. The nascent polypeptides leave the ribosome through a tunnel in the LSU and interact with protein factors that function in enzymatic processing, targeting, and the membrane insertion of nascent chains at the exit of the ribosomal tunnel. In Schizosaccharomyces pombe (strain 972 / ATCC 24843) (Fission yeast), this protein is Large ribosomal subunit protein eL38B (rpl3802).